The primary structure comprises 477 residues: Salivary plasminogen activator alpha 2 (477 aa).

The signal sequence occupies residues M1 to R36. The 43-residue stretch at V40 to V82 folds into the Fibronectin type-I domain. Disulfide bonds link C42–C72, C70–C79, C87–C98, C92–C109, C111–C120, C128–C209, C149–C191, C180–C204, C214–C345, C257–C273, C265–C334, C359–C434, C391–C407, and C424–C452. Positions P83–E121 constitute an EGF-like domain. The Kringle domain occupies C128–C209. N-linked (GlcNAc...) asparagine glycosylation occurs at N185. One can recognise a Peptidase S1 domain in the interval S226–R476. Active-site charge relay system residues include H272 and D321. An N-linked (GlcNAc...) asparagine glycan is attached at N398. Residue S428 is the Charge relay system of the active site.

This sequence belongs to the peptidase S1 family. As to quaternary structure, monomer.

The protein resides in the secreted. The enzyme catalyses Specific cleavage of Arg-|-Val bond in plasminogen to form plasmin.. With respect to regulation, activity toward plasminogen is stimulated in the presence of fibrin I. Functionally, probably essential to support the feeding habits of this exclusively haematophagous animal. Probable potent thrombolytic agent. This is Salivary plasminogen activator alpha 2 from Desmodus rotundus (Vampire bat).